Here is a 160-residue protein sequence, read N- to C-terminus: MARYENILELEPNLNGEDLSIGIVMSRFNIEASEGLLGACVEELMKQGVDAGNVVLVSVPGALEIPLALQKMALTDQFDALIALGAVIRGETYHFEIVSEQSTNGVSTVQLDTGIPIANGILTTNTDDQALARMSQKGAEAARVAIEMANLQRTLDEMEQ.

5-amino-6-(D-ribitylamino)uracil is bound by residues Phe-28, 62–64, and 86–88; these read ALE and AVI. 91–92 lines the (2S)-2-hydroxy-3-oxobutyl phosphate pocket; it reads ET. Catalysis depends on His-94, which acts as the Proton donor. Asn-119 provides a ligand contact to 5-amino-6-(D-ribitylamino)uracil. Arg-133 serves as a coordination point for (2S)-2-hydroxy-3-oxobutyl phosphate.

Belongs to the DMRL synthase family.

It catalyses the reaction (2S)-2-hydroxy-3-oxobutyl phosphate + 5-amino-6-(D-ribitylamino)uracil = 6,7-dimethyl-8-(1-D-ribityl)lumazine + phosphate + 2 H2O + H(+). It participates in cofactor biosynthesis; riboflavin biosynthesis; riboflavin from 2-hydroxy-3-oxobutyl phosphate and 5-amino-6-(D-ribitylamino)uracil: step 1/2. In terms of biological role, catalyzes the formation of 6,7-dimethyl-8-ribityllumazine by condensation of 5-amino-6-(D-ribitylamino)uracil with 3,4-dihydroxy-2-butanone 4-phosphate. This is the penultimate step in the biosynthesis of riboflavin. This is 6,7-dimethyl-8-ribityllumazine synthase from Nitrosospira multiformis (strain ATCC 25196 / NCIMB 11849 / C 71).